Reading from the N-terminus, the 198-residue chain is Protein hunchback (198 aa).

Disordered stretches follow at residues 16–117 and 152–198; these read SHHH…PMQS and NDKL…KYMA. Residues 17 to 31 show a composition bias toward basic residues; it reads HHHHHHHAHHSHHQH. 2 stretches are compositionally biased toward low complexity: residues 35 to 46 and 68 to 83; these read SNSNSNASSPHQ and QQQQ…QQQQ. The span at 95–105 shows a compositional bias: polar residues; it reads PSPSNNDQNSP. The segment covering 179–198 has biased composition (basic and acidic residues); the sequence is EPEKEHDLMSNSSEDMKYMA.

The protein belongs to the hunchback C2H2-type zinc-finger protein family.

It localises to the nucleus. In terms of biological role, gap class segmentation protein that controls development of head structures. The protein is Protein hunchback (hb) of Drosophila disjuncta (Fruit fly).